The chain runs to 1223 residues: Kinesin-like protein costa (1223 aa).

Residues 4–394 (PIQVAVRICP…LQFAFKVQCV (391 aa)) enclose the Kinesin motor domain. The interval 13–90 (PYTEPSENRK…LPTDSNGNEN (78 aa)) is disordered. A compositionally biased stretch (basic and acidic residues) spans 39–62 (AKAESFSDSEDNKNDASNRQRPEE). Position 178–185 (178–185 (GQRGQGKT)) interacts with ATP. Disordered stretches follow at residues 494 to 528 (RSQK…ESQR), 560 to 604 (KHPK…SIQP), and 625 to 646 (TAQP…ESSA). Basic and acidic residues predominate over residues 569–593 (QERDKESKLDAPPEKDKEKIEERKT). Coiled coils occupy residues 658–743 (AAAN…QGRE), 773–825 (ESGQ…GASG), and 982–1015 (NKVI…ERVL). The interval 774 to 799 (SGQKLKKLQQSMAESRKQQEELEKKI) is disordered. A compositionally biased stretch (basic and acidic residues) spans 787-799 (ESRKQQEELEKKI). The span at 1162-1178 (TTTATATTTTTTTTTTT) shows a compositional bias: low complexity. The segment at 1162–1188 (TTTATATTTTTTTTTTTGGKGKERGLP) is disordered.

It belongs to the TRAFAC class myosin-kinesin ATPase superfamily. Kinesin family. KIF27 subfamily. Homodimer (Potential). Binds microtubules. Interacts with ci, smo, sgg, CkIalpha and protein kinase A catalytic subunit.

The protein localises to the cytoplasm. It localises to the cytoskeleton. Its function is as follows. Regulates cubitus interruptus (ci) processing by recruiting multiple kinases to promote its efficient phosphorylation. Scaffolds multiple kinases and ci into proximity to promote its hyperphosphorylation, which then targets it for SCFSlimb/proteasome-mediated processing to generate its repressor form. Hh signaling inhibits ci phosphorylation by interfering with the cos-ci-kinases complex formation. This Drosophila pseudoobscura pseudoobscura (Fruit fly) protein is Kinesin-like protein costa (cos).